The chain runs to 208 residues: Component of Sp100-rs (208 aa).

One can recognise an HSR domain in the interval 6-121 (GSPRMSTEQE…LRRSFECGAK (116 aa)).

The protein is Component of Sp100-rs (Csprs) of Mus musculus (Mouse).